Reading from the N-terminus, the 1673-residue chain is Protein TIC 214 (1673 aa).

The next 6 membrane-spanning stretches (helical) occupy residues 18-38, 67-87, 90-110, 127-147, 175-195, and 218-238; these read IINS…FSIG, FITG…HLAL, PHTI…CNTH, LSIQ…HFIL, VGWI…VVWI, and SMSI…YYLG.

This sequence belongs to the TIC214 family. Part of the Tic complex.

It localises to the plastid. The protein localises to the chloroplast inner membrane. In terms of biological role, involved in protein precursor import into chloroplasts. May be part of an intermediate translocation complex acting as a protein-conducting channel at the inner envelope. The chain is Protein TIC 214 from Lactuca sativa (Garden lettuce).